Consider the following 851-residue polypeptide: Periplasmic nitrate reductase (851 aa).

The segment at residues 1-29 is a signal peptide (tat-type signal); it reads MQSNRRDFLKAQALAASAAAAGIPIVVEA. One can recognise a 4Fe-4S Mo/W bis-MGD-type domain in the interval 44-100; that stretch reads VRWDKAPCRFCGTGCAVMVGVQEGKVVATQGDPEAPVNRGLNCIKGYFLSKIMYGRD. [4Fe-4S] cluster-binding residues include Cys51, Cys54, Cys58, and Cys86. Mo-bis(molybdopterin guanine dinucleotide)-binding positions include Lys88, Gln155, Asn180, Cys184, 217–224, 248–252, and 267–269; these read WGSNMAEM, STYEH, and QTD. A disordered region spans residues 317 to 338; that stretch reads DATSNGYPGADGKPKGNPNDST. Mo-bis(molybdopterin guanine dinucleotide)-binding positions include Met388, Gln392, Asn498, 524–525, Lys547, Asp574, and 741–750; these read SD and TGRVLEHWHT. Residue Phe817 coordinates substrate. Mo-bis(molybdopterin guanine dinucleotide) contacts are provided by Asn825 and Lys842.

It belongs to the prokaryotic molybdopterin-containing oxidoreductase family. NasA/NapA/NarB subfamily. In terms of assembly, component of the periplasmic nitrate reductase NapAB complex composed of NapA and NapB. Requires [4Fe-4S] cluster as cofactor. The cofactor is Mo-bis(molybdopterin guanine dinucleotide). Predicted to be exported by the Tat system. The position of the signal peptide cleavage has not been experimentally proven.

It localises to the periplasm. It catalyses the reaction 2 Fe(II)-[cytochrome] + nitrate + 2 H(+) = 2 Fe(III)-[cytochrome] + nitrite + H2O. Catalytic subunit of the periplasmic nitrate reductase complex NapAB. Receives electrons from NapB and catalyzes the reduction of nitrate to nitrite. The polypeptide is Periplasmic nitrate reductase (Leptothrix cholodnii (strain ATCC 51168 / LMG 8142 / SP-6) (Leptothrix discophora (strain SP-6))).